Reading from the N-terminus, the 203-residue chain is RNA pyrophosphohydrolase (203 aa).

Positions 6-149 constitute a Nudix hydrolase domain; it reads GFRPNVGIIL…KRNVYQMALT (144 aa). A Nudix box motif is present at residues 38–59; the sequence is GGIKHGESPEQAMFRELHEEVG. A disordered region spans residues 170–203; sequence RAHRRDEGSEHNDHLDPTGPHDAGASVSEPKQAE. The span at 173–185 shows a compositional bias: basic and acidic residues; it reads RRDEGSEHNDHLD.

It belongs to the Nudix hydrolase family. RppH subfamily. Requires a divalent metal cation as cofactor.

Functionally, accelerates the degradation of transcripts by removing pyrophosphate from the 5'-end of triphosphorylated RNA, leading to a more labile monophosphorylated state that can stimulate subsequent ribonuclease cleavage. In Leptothrix cholodnii (strain ATCC 51168 / LMG 8142 / SP-6) (Leptothrix discophora (strain SP-6)), this protein is RNA pyrophosphohydrolase.